The following is a 354-amino-acid chain: Caffeic acid 3-O-methyltransferase (354 aa).

121 to 127 (MNQDKVL) lines the substrate pocket. The substrate binding stretch occupies residues 153-171 (AFEYHGKDQRFNKVFNSGM). S-adenosyl-L-methionine contacts are provided by glycine 199, aspartate 222, aspartate 242, methionine 243, and lysine 256. The active-site Proton acceptor is histidine 260.

The protein belongs to the class I-like SAM-binding methyltransferase superfamily. Cation-independent O-methyltransferase family. COMT subfamily. Homodimer.

The enzyme catalyses (E)-caffeate + S-adenosyl-L-methionine = (E)-ferulate + S-adenosyl-L-homocysteine + H(+). It functions in the pathway aromatic compound metabolism; phenylpropanoid biosynthesis. Catalyzes the conversion of caffeic acid to ferulic acid and of 5-hydroxyferulic acid to sinapic acid. The resulting products may subsequently be converted to the corresponding alcohols that are incorporated into lignins. This is Caffeic acid 3-O-methyltransferase from Zinnia elegans (Garden zinnia).